A 92-amino-acid chain; its full sequence is Small ribosomal subunit protein uS19 (92 aa).

This sequence belongs to the universal ribosomal protein uS19 family.

In terms of biological role, protein S19 forms a complex with S13 that binds strongly to the 16S ribosomal RNA. This is Small ribosomal subunit protein uS19 from Methylobacterium nodulans (strain LMG 21967 / CNCM I-2342 / ORS 2060).